The chain runs to 228 residues: Ribose-5-phosphate isomerase A (228 aa).

Substrate is bound by residues T29–T32, D85–D88, and K98–G101. Catalysis depends on E107, which acts as the Proton acceptor. K125 is a binding site for substrate.

Belongs to the ribose 5-phosphate isomerase family. As to quaternary structure, homodimer.

It carries out the reaction aldehydo-D-ribose 5-phosphate = D-ribulose 5-phosphate. Its pathway is carbohydrate degradation; pentose phosphate pathway; D-ribose 5-phosphate from D-ribulose 5-phosphate (non-oxidative stage): step 1/1. Functionally, catalyzes the reversible conversion of ribose-5-phosphate to ribulose 5-phosphate. The polypeptide is Ribose-5-phosphate isomerase A (Staphylococcus aureus (strain Mu50 / ATCC 700699)).